The following is a 325-amino-acid chain: tRNA N6-adenosine threonylcarbamoyltransferase (325 aa).

Fe cation-binding residues include His-111 and His-115. Residues 134–138 (LVSGG), Asp-167, Gly-180, Asp-184, and Asn-284 each bind substrate. Residue Asp-312 coordinates Fe cation.

Belongs to the KAE1 / TsaD family. Requires Fe(2+) as cofactor.

The protein localises to the cytoplasm. The catalysed reaction is L-threonylcarbamoyladenylate + adenosine(37) in tRNA = N(6)-L-threonylcarbamoyladenosine(37) in tRNA + AMP + H(+). Functionally, required for the formation of a threonylcarbamoyl group on adenosine at position 37 (t(6)A37) in tRNAs that read codons beginning with adenine. Is involved in the transfer of the threonylcarbamoyl moiety of threonylcarbamoyl-AMP (TC-AMP) to the N6 group of A37, together with TsaE and TsaB. TsaD likely plays a direct catalytic role in this reaction. The polypeptide is tRNA N6-adenosine threonylcarbamoyltransferase (Trichodesmium erythraeum (strain IMS101)).